Here is a 252-residue protein sequence, read N- to C-terminus: tRNA-cytidine(32) 2-sulfurtransferase (252 aa).

The PP-loop motif motif lies at 37–42 (SGGKDS). Residues Cys112, Cys115, and Cys202 each contribute to the [4Fe-4S] cluster site.

This sequence belongs to the TtcA family. In terms of assembly, homodimer. Mg(2+) is required as a cofactor. Requires [4Fe-4S] cluster as cofactor.

The protein resides in the cytoplasm. It catalyses the reaction cytidine(32) in tRNA + S-sulfanyl-L-cysteinyl-[cysteine desulfurase] + AH2 + ATP = 2-thiocytidine(32) in tRNA + L-cysteinyl-[cysteine desulfurase] + A + AMP + diphosphate + H(+). Its pathway is tRNA modification. Functionally, catalyzes the ATP-dependent 2-thiolation of cytidine in position 32 of tRNA, to form 2-thiocytidine (s(2)C32). The sulfur atoms are provided by the cysteine/cysteine desulfurase (IscS) system. The chain is tRNA-cytidine(32) 2-sulfurtransferase from Geotalea daltonii (strain DSM 22248 / JCM 15807 / FRC-32) (Geobacter daltonii).